Consider the following 201-residue polypeptide: Recombination protein RecR (201 aa).

The segment at 57 to 74 adopts a C4-type zinc-finger fold; sequence CRICGNITENSVNPCAIC. In terms of domain architecture, Toprim spans 82-178; that stretch reads STVFVVENSR…KVTRLAHGLA (97 aa).

Belongs to the RecR family.

In terms of biological role, may play a role in DNA repair. It seems to be involved in an RecBC-independent recombinational process of DNA repair. It may act with RecF and RecO. The polypeptide is Recombination protein RecR (Leuconostoc citreum (strain KM20)).